We begin with the raw amino-acid sequence, 334 residues long: Beta-1,3-N-acetylglucosaminyltransferase radical fringe (334 aa).

The Cytoplasmic portion of the chain corresponds to 1–6; the sequence is MSRVRR. A helical; Signal-anchor for type II membrane protein membrane pass occupies residues 7 to 29; it reads VLCRACLALAAVLAVLLLLPLPL. Topologically, residues 30-334 are lumenal; that stretch reads PLPLPLPRAP…MKNRGKEAFQ (305 aa). Residue R77 participates in substrate binding. The N-linked (GlcNAc...) asparagine glycan is linked to N116. 2 disulfides stabilise this stretch: C117–C128 and C146–C210. D150 is a binding site for substrate. D151 is a Mn(2+) binding site. D240 is an active-site residue. H264 lines the Mn(2+) pocket. The cysteines at positions 314 and 323 are disulfide-linked.

The protein belongs to the glycosyltransferase 31 family. The cofactor is Mn(2+). As to expression, most abundantly expressed in adult brain. Expressed in most neurons of the brain but not in glial cells. Also detected to a lower extent in adult lung and kidney.

It is found in the golgi apparatus membrane. The enzyme catalyses 3-O-(alpha-L-fucosyl)-L-threonyl-[EGF-like domain protein] + UDP-N-acetyl-alpha-D-glucosamine = 3-O-(N-acetyl-beta-D-glucosaminyl-(1-&gt;3)-alpha-L-fucosyl)-L-threonyl-[EGF-like domain protein] + UDP + H(+). It catalyses the reaction 3-O-(alpha-L-fucosyl)-L-seryl-[EGF-like domain protein] + UDP-N-acetyl-alpha-D-glucosamine = 3-O-(N-acetyl-beta-D-glucosaminyl-(1-&gt;3)-alpha-L-fucosyl)-L-seryl-[EGF-like domain protein] + UDP + H(+). Functionally, glycosyltransferase that initiates the elongation of O-linked fucose residues attached to EGF-like repeats in the extracellular domain of Notch molecules. Modulates NOTCH1 activity by modifying O-fucose residues at specific EGF-like domains resulting in enhancement of NOTCH1 activation by DLL1 and JAG1. Inhibits Notch signaling in postmitotic neurons of the brain. It may play a role in adult brain and in neurogenesis. It may play a role in limb development. The sequence is that of Beta-1,3-N-acetylglucosaminyltransferase radical fringe from Rattus norvegicus (Rat).